We begin with the raw amino-acid sequence, 321 residues long: CRISPR-associated aCascade subunit Cas7/Csa2 2 (321 aa).

It belongs to the CRISPR-associated protein Cas7/Cst2/DevR family. Subtype I-a/Apern subfamily. In terms of assembly, part of the aCascade ribonucleoprotein complex, minimally composed of Csa2 and Cas5a, which binds crRNA. Other possible components of aCascade in strain P1 are Cas6b (SSO1437) and Csa5 (SSO1443), while SSO1399, Cas5b (SSO1400) and SSO1401 have sometimes been seen weakly associated. Csa2 is probably the major RNA-binding subunit. The Csa2-Cas5a-crRNA complex also binds target DNA homologous to crRNA, probably forming an R-loop. Purified aCascade forms a filament about 6 nm in width.

CRISPR (clustered regularly interspaced short palindromic repeat) is an adaptive immune system that provides protection against mobile genetic elements (viruses, transposable elements and conjugative plasmids). CRISPR clusters contain spacers, sequences complementary to antecedent mobile elements, and target invading nucleic acids. CRISPR clusters are transcribed and processed into CRISPR RNA (crRNA). The polypeptide is CRISPR-associated aCascade subunit Cas7/Csa2 2 (csa2b) (Saccharolobus solfataricus (strain ATCC 35092 / DSM 1617 / JCM 11322 / P2) (Sulfolobus solfataricus)).